The following is an 863-amino-acid chain: Leucine--tRNA ligase (863 aa).

A 'HIGH' region motif is present at residues 40–51 (PYPSGAGLHVGH). Residues 635–639 (KMSKS) carry the 'KMSKS' region motif. K638 lines the ATP pocket.

It belongs to the class-I aminoacyl-tRNA synthetase family.

The protein resides in the cytoplasm. The catalysed reaction is tRNA(Leu) + L-leucine + ATP = L-leucyl-tRNA(Leu) + AMP + diphosphate. This chain is Leucine--tRNA ligase, found in Leptospira interrogans serogroup Icterohaemorrhagiae serovar Lai (strain 56601).